The chain runs to 428 residues: Histone-lysine N-methyltransferase SMYD3 (428 aa).

Met-1 carries the N-acetylmethionine modification. The SET domain occupies 4–240; sequence LKVEKFTTAN…AGEELTICYL (237 aa). 14–16 provides a ligand contact to S-adenosyl-L-methionine; sequence RGN. 8 residues coordinate Zn(2+): Cys-49, Cys-52, Cys-62, Cys-65, Cys-71, Cys-75, His-83, and Cys-87. Residues 49 to 87 form an MYND-type zinc finger; it reads CDRCLLGKEKLMRCSQCRIAKYCSAKCQKKAWPDHRREC. S-adenosyl-L-methionine contacts are provided by residues Tyr-124, Asn-132, 205–206, Tyr-239, and Phe-259; that span reads NH. The tract at residues 272–428 is C-terminal domain; essential for histone methyltransferase activity, nuclear localization and mediates interaction with HSP90AA1; sequence DADMLTGDEQ…EECDANIRAS (157 aa).

It belongs to the class V-like SAM-binding methyltransferase superfamily. Histone-lysine methyltransferase family. Interacts with HSPCA. Interacts with HELZ. Interacts with POLR2A; the interaction may be indirect and may be mediated by HELZ. Interacts with HSP90AA1; this interaction enhances SMYD3 histone-lysine N-methyltransferase.

The protein resides in the cytoplasm. It is found in the nucleus. It carries out the reaction L-lysyl(4)-[histone H3] + 3 S-adenosyl-L-methionine = N(6),N(6),N(6)-trimethyl-L-lysyl(4)-[histone H3] + 3 S-adenosyl-L-homocysteine + 3 H(+). Its activity is regulated as follows. Histone methyltransferase activity strongly stimulated by HSPCA. Its function is as follows. Histone methyltransferase. Specifically methylates 'Lys-4' of histone H3, inducing di- and tri-methylation, but not monomethylation. Also methylates 'Lys-5' of histone H4. Plays an important role in transcriptional activation as a member of an RNA polymerase complex. Binds DNA containing 5'-CCCTCC-3' or 5'-GAGGGG-3' sequences. This is Histone-lysine N-methyltransferase SMYD3 (Smyd3) from Mus musculus (Mouse).